The primary structure comprises 619 residues: 1-deoxy-D-xylulose-5-phosphate synthase (619 aa).

Residues His74 and 115-117 (GHS) each bind thiamine diphosphate. A Mg(2+)-binding site is contributed by Asp146. Thiamine diphosphate contacts are provided by residues 147–148 (GA), Asn175, and Tyr285. A Mg(2+)-binding site is contributed by Asn175. The interval 289–312 (EKSPSKYHAVPPRANEKEKPSKPC) is disordered. Positions 302-312 (ANEKEKPSKPC) are enriched in basic and acidic residues. Glu365 contacts thiamine diphosphate.

It belongs to the transketolase family. DXPS subfamily. Homodimer. The cofactor is Mg(2+). Thiamine diphosphate is required as a cofactor.

The catalysed reaction is D-glyceraldehyde 3-phosphate + pyruvate + H(+) = 1-deoxy-D-xylulose 5-phosphate + CO2. The protein operates within metabolic intermediate biosynthesis; 1-deoxy-D-xylulose 5-phosphate biosynthesis; 1-deoxy-D-xylulose 5-phosphate from D-glyceraldehyde 3-phosphate and pyruvate: step 1/1. Functionally, catalyzes the acyloin condensation reaction between C atoms 2 and 3 of pyruvate and glyceraldehyde 3-phosphate to yield 1-deoxy-D-xylulose-5-phosphate (DXP). This Clostridium botulinum (strain Eklund 17B / Type B) protein is 1-deoxy-D-xylulose-5-phosphate synthase.